A 106-amino-acid polypeptide reads, in one-letter code: UPF0060 membrane protein R01043 (106 aa).

Transmembrane regions (helical) follow at residues 5–25 (AIYF…WSWL), 31–51 (ALWL…LTMV), 61–81 (AAYG…AEGV), and 85–105 (HWDM…LAGP).

It belongs to the UPF0060 family.

Its subcellular location is the cell inner membrane. The polypeptide is UPF0060 membrane protein R01043 (Rhizobium meliloti (strain 1021) (Ensifer meliloti)).